The primary structure comprises 55 residues: U17-myrmicitoxin-Mri1b (55 aa).

The signal sequence occupies residues 1-31 (MENSRTSTFTAYVTVAFLLISTFVTMVVTES). At Gln32 the chain carries Pyrrolidone carboxylic acid.

Contains 1 disulfide bond. Expressed by the venom gland.

Its subcellular location is the secreted. The protein is U17-myrmicitoxin-Mri1b of Manica rubida (European giant red ant).